A 169-amino-acid chain; its full sequence is Putative phosphoesterase SERP0604 (169 aa).

H34 acts as the Proton donor in catalysis. Short sequence motifs (HXTX) lie at residues 34-37 and 115-118; these read HITI and HFTI. The active-site Proton acceptor is the H115.

This sequence belongs to the 2H phosphoesterase superfamily. YjcG family.

The protein is Putative phosphoesterase SERP0604 of Staphylococcus epidermidis (strain ATCC 35984 / DSM 28319 / BCRC 17069 / CCUG 31568 / BM 3577 / RP62A).